The primary structure comprises 957 residues: Leucine--tRNA ligase (957 aa).

A 'HIGH' region motif is present at residues 70–81 (PYPSGAGLHVGH). The 'KMSKS' region signature appears at 727–731 (KMGKS). An ATP-binding site is contributed by lysine 730.

It belongs to the class-I aminoacyl-tRNA synthetase family.

The protein resides in the cytoplasm. The enzyme catalyses tRNA(Leu) + L-leucine + ATP = L-leucyl-tRNA(Leu) + AMP + diphosphate. This is Leucine--tRNA ligase from Corynebacterium efficiens (strain DSM 44549 / YS-314 / AJ 12310 / JCM 11189 / NBRC 100395).